The chain runs to 76 residues: Conotoxin Vc6.9 (76 aa).

A signal peptide spans 1 to 19; that stretch reads MEKLTILLLVAAVLMSTQA. A propeptide spanning residues 20 to 41 is cleaved from the precursor; sequence LMQEQRQKAKINLFSKRKPSAE. 3 disulfide bridges follow: C49-C63, C56-C67, and C62-C72.

It belongs to the conotoxin O2 superfamily. As to expression, expressed by the venom duct.

Its subcellular location is the secreted. In terms of biological role, inhibits voltage-gated ion channels. This is Conotoxin Vc6.9 from Conus victoriae (Queen Victoria cone).